The sequence spans 215 residues: Protein C' (215 aa).

Disordered stretches follow at residues 12–34 (MPSFLKKILKLRGRRQEEESRSR) and 51–71 (SEGTEAGSTTPSTLPKDQALP). The segment at 15–22 (FLKKILKL) is involved in self-degradation and in host STAT1 degradation. Polar residues predominate over residues 51–65 (SEGTEAGSTTPSTLP).

Belongs to the respirovirus protein C family. In terms of assembly, the different isoforms interact (via C-terminus) with unphosphorylated and phosphorylated human STAT1 (via N-terminus), favoring the formation of parallel STAT1 homodimers. The different isoforms do not interact with host STAT2. C protein interacts with L protein; this interaction has an inhibitory effect on viral transcription and replication. In terms of processing, Y1 and Y2 proteins are produced not only by alternative initiation, but also by proteolytic cleavage of C'. Only alternative initiation is detected in vitro, whereas in vivo cleavage seems to be predominant.

It localises to the host cytoplasm. Its function is as follows. The different products prevent the establishment of cellular antiviral state by blocking the interferon-alpha/beta (IFN-alpha/beta) and IFN-gamma signaling pathways. They inhibit IFN-alpha/beta induced tyrosine phosphorylation of STAT1 and STAT2. Blocking the IFN-alpha/beta pathway requires binding to STAT1 in the cytoplasm. They inhibit IFN-gamma induced serine phosphorylation of STAT1. Block the IFN-gamma pathway by binding to and stabilizing the parallel form of the STAT1 dimer, further inducing high-molecular-weight complex formation and inhibition of transcription by IFN-gamma. May also have a role in preventing the cell to enter apoptosis. Modulate regulation of viral transcription and replication. Overexpression inhibits the viral RNA polymerase. The absence of all C', C, Y1 and Y2 proteins leads to viral delayed growth. Plays an important role in virion particles release. Modulates virion shape. The protein is Protein C' (P/V/C) of Sendai virus (strain Harris) (SeV).